The sequence spans 248 residues: 3-deoxy-manno-octulosonate cytidylyltransferase (248 aa).

It belongs to the KdsB family.

The protein localises to the cytoplasm. It catalyses the reaction 3-deoxy-alpha-D-manno-oct-2-ulosonate + CTP = CMP-3-deoxy-beta-D-manno-octulosonate + diphosphate. Its pathway is nucleotide-sugar biosynthesis; CMP-3-deoxy-D-manno-octulosonate biosynthesis; CMP-3-deoxy-D-manno-octulosonate from 3-deoxy-D-manno-octulosonate and CTP: step 1/1. It functions in the pathway bacterial outer membrane biogenesis; lipopolysaccharide biosynthesis. Its function is as follows. Activates KDO (a required 8-carbon sugar) for incorporation into bacterial lipopolysaccharide in Gram-negative bacteria. This chain is 3-deoxy-manno-octulosonate cytidylyltransferase, found in Citrobacter koseri (strain ATCC BAA-895 / CDC 4225-83 / SGSC4696).